A 155-amino-acid polypeptide reads, in one-letter code: Ribonuclease H (155 aa).

Residues 5 to 146 (LAEVVEIFTD…ADMLANRGVQ (142 aa)) enclose the RNase H type-1 domain. 4 residues coordinate Mg(2+): aspartate 14, glutamate 52, aspartate 74, and aspartate 138.

Belongs to the RNase H family. In terms of assembly, monomer. Requires Mg(2+) as cofactor.

The protein localises to the cytoplasm. It carries out the reaction Endonucleolytic cleavage to 5'-phosphomonoester.. Endonuclease that specifically degrades the RNA of RNA-DNA hybrids. The sequence is that of Ribonuclease H from Nitrosospira multiformis (strain ATCC 25196 / NCIMB 11849 / C 71).